The chain runs to 178 residues: Glucagon-1 (178 aa).

A signal peptide spans Met1–Ala21. Propeptides lie at residues Ser83–Ser87, Glu123–Ser134, and Ser171–His178.

This sequence belongs to the glucagon family.

Its subcellular location is the secreted. Promotes hydrolysis of glycogen and lipids, and raises the blood sugar level. The protein is Glucagon-1 (gcg1) of Oncorhynchus mykiss (Rainbow trout).